Reading from the N-terminus, the 719-residue chain is Phosphoribosylformylglycinamidine synthase subunit PurL (719 aa).

His-47 is a catalytic residue. ATP contacts are provided by Tyr-50 and Lys-89. Glu-91 is a Mg(2+) binding site. Substrate-binding positions include Ser-92–His-95 and Arg-114. His-93 serves as the catalytic Proton acceptor. Asp-115 is a Mg(2+) binding site. Gln-238 lines the substrate pocket. Asp-266 lines the Mg(2+) pocket. Glu-310–Gln-312 is a substrate binding site. Residues Asp-488 and Gly-525 each coordinate ATP. Asn-526 contributes to the Mg(2+) binding site. Ser-528 provides a ligand contact to substrate.

This sequence belongs to the FGAMS family. Monomer. Part of the FGAM synthase complex composed of 1 PurL, 1 PurQ and 2 PurS subunits.

It localises to the cytoplasm. It carries out the reaction N(2)-formyl-N(1)-(5-phospho-beta-D-ribosyl)glycinamide + L-glutamine + ATP + H2O = 2-formamido-N(1)-(5-O-phospho-beta-D-ribosyl)acetamidine + L-glutamate + ADP + phosphate + H(+). It functions in the pathway purine metabolism; IMP biosynthesis via de novo pathway; 5-amino-1-(5-phospho-D-ribosyl)imidazole from N(2)-formyl-N(1)-(5-phospho-D-ribosyl)glycinamide: step 1/2. Part of the phosphoribosylformylglycinamidine synthase complex involved in the purines biosynthetic pathway. Catalyzes the ATP-dependent conversion of formylglycinamide ribonucleotide (FGAR) and glutamine to yield formylglycinamidine ribonucleotide (FGAM) and glutamate. The FGAM synthase complex is composed of three subunits. PurQ produces an ammonia molecule by converting glutamine to glutamate. PurL transfers the ammonia molecule to FGAR to form FGAM in an ATP-dependent manner. PurS interacts with PurQ and PurL and is thought to assist in the transfer of the ammonia molecule from PurQ to PurL. This Ruegeria pomeroyi (strain ATCC 700808 / DSM 15171 / DSS-3) (Silicibacter pomeroyi) protein is Phosphoribosylformylglycinamidine synthase subunit PurL.